The following is a 358-amino-acid chain: Mitogen-activated protein kinase hog-1 (358 aa).

The region spanning 20–299 is the Protein kinase domain; sequence YSDLQPVGMG…ATEALSHEYL (280 aa). Residues 26-34 and Lys49 each bind ATP; that span reads VGMGAFGLV. The Proton acceptor role is filled by Asp141. A Phosphothreonine modification is found at Thr171. Positions 171–173 match the TXY motif; it reads TGY. Tyr173 is subject to Phosphotyrosine.

It belongs to the protein kinase superfamily. Ser/Thr protein kinase family. MAP kinase subfamily. HOG1 sub-subfamily. Mg(2+) is required as a cofactor. Dually phosphorylated on Thr-171 and Tyr-173, which activates the enzyme. Phosphorylation is induced by fungicides and osmotic stress.

It localises to the cytoplasm. The protein resides in the nucleus. It carries out the reaction L-seryl-[protein] + ATP = O-phospho-L-seryl-[protein] + ADP + H(+). The enzyme catalyses L-threonyl-[protein] + ATP = O-phospho-L-threonyl-[protein] + ADP + H(+). Its activity is regulated as follows. Activated by tyrosine and threonine phosphorylation. In terms of biological role, proline-directed serine/threonine-protein kinase involved in a signal transduction pathway that is activated by changes in the osmolarity of the extracellular environment. Controls osmotic regulation of transcription of target genes. Involved in ion flux-mediated turgor regulation. This is Mitogen-activated protein kinase hog-1 (hog-1) from Neurospora crassa (strain ATCC 24698 / 74-OR23-1A / CBS 708.71 / DSM 1257 / FGSC 987).